We begin with the raw amino-acid sequence, 301 residues long: Envoplakin-like protein (301 aa).

A coiled-coil region spans residues 1–88 (MQASADQVER…ERVTQECAEY (88 aa)). Disordered stretches follow at residues 18–41 (RLQQ…TGSS) and 118–166 (GLRR…PEPI). Positions 26-41 (SEQSQALQHQQETGSS) are enriched in polar residues. Residues 136–151 (GAQHRAEGDQRPRRAA) show a composition bias toward basic and acidic residues.

Belongs to the plakin or cytolinker family.

The sequence is that of Envoplakin-like protein (EVPLL) from Homo sapiens (Human).